A 222-amino-acid chain; its full sequence is Phosphoenolpyruvate guanylyltransferase (222 aa).

Positions 147, 163, and 166 each coordinate phosphoenolpyruvate.

Belongs to the CofC family.

It catalyses the reaction phosphoenolpyruvate + GTP + H(+) = enolpyruvoyl-2-diphospho-5'-guanosine + diphosphate. It functions in the pathway cofactor biosynthesis; coenzyme F420 biosynthesis. In terms of biological role, guanylyltransferase that catalyzes the activation of phosphoenolpyruvate (PEP) as enolpyruvoyl-2-diphospho-5'-guanosine, via the condensation of PEP with GTP. It is involved in the biosynthesis of coenzyme F420, a hydride carrier cofactor. The protein is Phosphoenolpyruvate guanylyltransferase of Streptosporangium roseum (strain ATCC 12428 / DSM 43021 / JCM 3005 / KCTC 9067 / NCIMB 10171 / NRRL 2505 / NI 9100).